A 59-amino-acid polypeptide reads, in one-letter code: MFTLKKSLLLLFFLGTINFSLCEEERNAEEERRDYPEERDVEVEKRIIPLPLGYFAKKT.

An N-terminal signal peptide occupies residues Met1–Cys22. Residues Glu23–Glu44 constitute a propeptide that is removed on maturation.

The protein belongs to the frog skin active peptide (FSAP) family. Brevinin subfamily. Expressed by the skin glands.

The protein resides in the secreted. In terms of biological role, antimicrobial peptide. Has activity against the Gram-positive bacterium S.aureus (MIC=6 uM) and the Gram-negative bacterium E.coli (MIC=3 uM). Lacks hemolytic activity against human erythrocytes. This Rana dybowskii (Dybovsky's frog) protein is Dybowskin-1CDYa.